Consider the following 462-residue polypeptide: Lysyl endopeptidase (462 aa).

Positions 1–24 are cleaved as a signal peptide; sequence MHKRTYLNACLVLALAAGASQALA. A propeptide spanning residues 25 to 211 is cleaved from the precursor; sequence APGASEMAGD…VSYFADSLYK (187 aa). 3 disulfides stabilise this stretch: C224–C435, C230–C305, and C262–C284. Residues H283, D333, and S409 each act as charge relay system in the active site.

Belongs to the peptidase S1 family. Post-translationally, experiments performed in E.coli. Processing of pro-endopeptidase to mature endopeptidase is probably autocatalytic, as mutations in the probable active site residues prevent processing, and purified inactive pro-endopeptidase disappears in the presence of active endopeptidase.

The protein resides in the secreted. It carries out the reaction Preferential cleavage: Lys-|-Xaa, including Lys-|-Pro.. In terms of biological role, lysine-specific endoprotease. Involved in corneal virulence. The polypeptide is Lysyl endopeptidase (prpL) (Pseudomonas aeruginosa (strain ATCC 15692 / DSM 22644 / CIP 104116 / JCM 14847 / LMG 12228 / 1C / PRS 101 / PAO1)).